We begin with the raw amino-acid sequence, 84 residues long: Hepcidin (84 aa).

Residues 1–24 (MALSSQIWAACLLLLLLLASLTSG) form the signal peptide. Positions 25–54 (SVFPQQTGQLAELQPQDRAGARASWMPMFQ) are excised as a propeptide. 4 disulfides stabilise this stretch: cysteine 66–cysteine 82, cysteine 69–cysteine 72, cysteine 70–cysteine 78, and cysteine 73–cysteine 81.

Belongs to the hepcidin family. In terms of assembly, interacts with SLC40A1; this interaction promotes SLC40A1 rapid ubiquitination. Highest expression in liver and to a lesser extent in heart and brain. Low levels in lung, tonsils, salivary gland, trachea, prostate gland, adrenal gland and thyroid gland. Secreted into the urine and blood. Expressed by hepatocytes.

It is found in the secreted. Its function is as follows. Liver-produced hormone that constitutes the main circulating regulator of iron absorption and distribution across tissues. Acts by promoting endocytosis and degradation of ferroportin/SLC40A1, leading to the retention of iron in iron-exporting cells and decreased flow of iron into plasma. Controls the major flows of iron into plasma: absorption of dietary iron in the intestine, recycling of iron by macrophages, which phagocytose old erythrocytes and other cells, and mobilization of stored iron from hepatocytes. Functionally, has strong antimicrobial activity against E.coli ML35P N.cinerea and weaker against S.epidermidis, S.aureus and group b streptococcus bacteria. Active against the fungus C.albicans. No activity against P.aeruginosa. This Homo sapiens (Human) protein is Hepcidin.